The sequence spans 122 residues: uncharacterized protein (122 aa).

Its subcellular location is the mitochondrion. This is an uncharacterized protein from Arabidopsis thaliana (Mouse-ear cress).